The following is a 264-amino-acid chain: 14-3-3-like protein GF14-A (264 aa).

The interval 245–264 (DMQDDGGDEMRDATKPEDEH) is disordered. Basic and acidic residues predominate over residues 252–264 (DEMRDATKPEDEH).

The protein belongs to the 14-3-3 family.

Is associated with a DNA binding complex that binds to the G box, a well-characterized cis-acting DNA regulatory element found in plant genes. The sequence is that of 14-3-3-like protein GF14-A (GF14A) from Oryza sativa subsp. japonica (Rice).